A 360-amino-acid polypeptide reads, in one-letter code: 45 kDa calcium-binding protein (360 aa).

The signal sequence occupies residues 1–29 (MVSKQAFLFSLGSLYLSLLFVFLLMDVYA). Asparagine 33 carries an N-linked (GlcNAc...) asparagine glycan. 5 consecutive EF-hand domains span residues 96–131 (RNRRKLAAIFAKVDRNEDKQISANEMQRWIMEKTEE), 135–170 (EAVNENKLHFRAVDPDGDGHVSWDEYKIKFLASKGF), 231–266 (MLKFMVKEIIRDLDQDGDKKLTLSEFISLPVGTVEN), 276–311 (WVRDRKKEYEEVIDANHDGIVTMEELEEYMDPMNEY), and 312–347 (NALNEAKQMIAVADENQDHHLSLEEILKYSEYFTGS). 24 residues coordinate Ca(2+): aspartate 109, asparagine 111, aspartate 113, glutamine 115, glutamate 120, aspartate 148, aspartate 150, aspartate 152, histidine 154, glutamate 159, aspartate 244, aspartate 246, aspartate 248, lysine 250, glutamate 255, aspartate 289, asparagine 291, aspartate 293, glutamate 300, aspartate 325, asparagine 327, aspartate 329, histidine 331, and glutamate 336.

Belongs to the CREC family.

It is found in the golgi apparatus lumen. In terms of biological role, may regulate calcium-dependent activities in the endoplasmic reticulum lumen or post-ER compartment. This chain is 45 kDa calcium-binding protein (sdf4), found in Xenopus tropicalis (Western clawed frog).